The sequence spans 503 residues: Maturase K (503 aa).

This sequence belongs to the intron maturase 2 family. MatK subfamily.

The protein localises to the plastid. It localises to the chloroplast. In terms of biological role, usually encoded in the trnK tRNA gene intron. Probably assists in splicing its own and other chloroplast group II introns. This is Maturase K from Psilotum nudum (Whisk fern).